We begin with the raw amino-acid sequence, 255 residues long: Probable membrane transporter protein HI_0198 (255 aa).

A run of 8 helical transmembrane segments spans residues 7–27 (LLAI…IAGG), 28–48 (GGLI…MALG), 76–96 (IWFI…LIQS), 99–119 (VAIF…YFLF), 132–152 (LSYL…DGFF), 153–173 (GPGT…FNLP), 191–211 (FALF…MMAG), and 235–255 (VVIM…WFHF).

The protein belongs to the 4-toluene sulfonate uptake permease (TSUP) (TC 2.A.102) family.

It localises to the cell membrane. This is Probable membrane transporter protein HI_0198 from Haemophilus influenzae (strain ATCC 51907 / DSM 11121 / KW20 / Rd).